We begin with the raw amino-acid sequence, 421 residues long: Lipid II:glycine glycyltransferase (421 aa).

The protein belongs to the FemABX family. As to quaternary structure, monomer.

The protein resides in the cytoplasm. It catalyses the reaction beta-D-GlcNAc-(1-&gt;4)-Mur2Ac(oyl-L-Ala-D-isoglutaminyl-L-Lys-D-Ala-D-Ala)-di-trans,octa-cis-undecaprenyl diphosphate + glycyl-tRNA(Gly) = beta-D-GlcNAc-(1-&gt;4)-Mur2Ac(oyl-L-Ala-D-isoglutaminyl-L-Lys-(N(6)-Gly)-D-Ala-D-Ala)-di-trans,octa-cis-undecaprenyl diphosphate + tRNA(Gly) + H(+). Catalyzes the incorporation of the first glycine of the pentaglycine interpeptide bridge, which is characteristic of the S.aureus peptidoglycan. This glycine is added to the epsilon-amino group of the L-lysine of the membrane-bound lipid II intermediate (GlcNAc-(beta-1,4)-N-acetylmuramic acid(-L-Ala-D-iGln-L-Lys-D-Ala-D-Ala)-pyrophosphoryl-undecaprenol), using glycyl-tRNA(Gly) as donor, in a ribosome-independent mechanism. Involved in methicillin resistance. In Staphylococcus aureus (strain Mu50 / ATCC 700699), this protein is Lipid II:glycine glycyltransferase (femX).